The sequence spans 101 residues: Phosphoribosyl-AMP cyclohydrolase (101 aa).

Residue aspartate 71 coordinates Mg(2+). Cysteine 72 is a Zn(2+) binding site. Mg(2+)-binding residues include aspartate 73 and aspartate 75. Zn(2+) contacts are provided by cysteine 88 and cysteine 95.

The protein belongs to the PRA-CH family. As to quaternary structure, homodimer. The cofactor is Mg(2+). Requires Zn(2+) as cofactor.

The protein localises to the cytoplasm. It catalyses the reaction 1-(5-phospho-beta-D-ribosyl)-5'-AMP + H2O = 1-(5-phospho-beta-D-ribosyl)-5-[(5-phospho-beta-D-ribosylamino)methylideneamino]imidazole-4-carboxamide. Its pathway is amino-acid biosynthesis; L-histidine biosynthesis; L-histidine from 5-phospho-alpha-D-ribose 1-diphosphate: step 3/9. In terms of biological role, catalyzes the hydrolysis of the adenine ring of phosphoribosyl-AMP. This chain is Phosphoribosyl-AMP cyclohydrolase, found in Bacillus cereus (strain ZK / E33L).